Reading from the N-terminus, the 266-residue chain is 3-methyl-2-oxobutanoate hydroxymethyltransferase (266 aa).

Residues D45 and D84 each coordinate Mg(2+). 3-methyl-2-oxobutanoate is bound by residues 45–46 (DS), D84, and K112. Residue E114 participates in Mg(2+) binding. Catalysis depends on E181, which acts as the Proton acceptor.

The protein belongs to the PanB family. In terms of assembly, homodecamer; pentamer of dimers. Mg(2+) is required as a cofactor.

The protein resides in the cytoplasm. It catalyses the reaction 3-methyl-2-oxobutanoate + (6R)-5,10-methylene-5,6,7,8-tetrahydrofolate + H2O = 2-dehydropantoate + (6S)-5,6,7,8-tetrahydrofolate. It functions in the pathway cofactor biosynthesis; (R)-pantothenate biosynthesis; (R)-pantoate from 3-methyl-2-oxobutanoate: step 1/2. In terms of biological role, catalyzes the reversible reaction in which hydroxymethyl group from 5,10-methylenetetrahydrofolate is transferred onto alpha-ketoisovalerate to form ketopantoate. This Stutzerimonas stutzeri (strain A1501) (Pseudomonas stutzeri) protein is 3-methyl-2-oxobutanoate hydroxymethyltransferase.